We begin with the raw amino-acid sequence, 316 residues long: Adenine deaminase (316 aa).

His-14, His-16, and His-194 together coordinate Zn(2+). The Proton donor role is filled by Glu-197. Zn(2+) is bound at residue Asp-275. Asp-276 provides a ligand contact to substrate.

The protein belongs to the metallo-dependent hydrolases superfamily. Adenosine and AMP deaminases family. Adenine deaminase type 2 subfamily. Requires Zn(2+) as cofactor.

The catalysed reaction is adenine + H2O + H(+) = hypoxanthine + NH4(+). In terms of biological role, catalyzes the hydrolytic deamination of adenine to hypoxanthine. Plays an important role in the purine salvage pathway and in nitrogen catabolism. In Pseudomonas aeruginosa (strain UCBPP-PA14), this protein is Adenine deaminase.